A 6781-amino-acid polypeptide reads, in one-letter code: Replicase polyprotein 1ab (6781 aa).

The region spanning 2-109 is the CoV Nsp1 globular domain; that stretch reads ASNHVTLAFA…ELELTFGRRG (108 aa). The ssDNA site is built by glutamate 59, asparagine 95, glutamate 99, and glutamate 102. The region spanning 112 to 364 is the CoV Nsp2 N-terminal domain; sequence IVPVDQYMCG…TKLKFDILSG (253 aa). A CoV Nsp2 middle domain is found at 383–776; that stretch reads SALVDIVDDA…AEMYNTYLST (394 aa). One can recognise a CoV Nsp2 C-terminal domain in the interval 778-895; that stretch reads VENLVLAGVS…VPICFKKKGG (118 aa). Residues 896-991 enclose the Ubiquitin-like 1 domain; the sequence is GDVKFSDEVS…VMVSQWPLND (96 aa). Residues 1009-1040 form a disordered region; it reads IDSEGDEVDSSAPEKVADVANSEPGDDGLPVA. Residues 1057–1296 form the Peptidase C16 1 domain; that stretch reads SFIKDTPSTV…EPVVKPFYSY (240 aa). Residue cysteine 1091 is the For PL1-PRO activity of the active site. The C4-type 1; degenerate zinc finger occupies 1162–1193; it reads CGCGTGERIYEGCAFRMTPTLEPFPYGACAQC. Active-site for PL1-PRO activity residues include histidine 1239 and aspartate 1252. Residues 1297-1465 form the Macro domain; the sequence is KNVDFYQGDF…IFKEALVDTT (169 aa). A Ubiquitin-like 2 domain is found at 1630–1685; sequence NKSVVIKVTEDTRSVKAVKVESTATYGQQIGPCLVNDTVVTDNKPVVADVVAKVVP. In terms of domain architecture, Peptidase C16 2 spans 1691-1951; it reads SHYGFDKAGE…LLDTMNYASE (261 aa). Cysteine 1729 serves as the catalytic For PL2-PRO activity. The C4-type 2; degenerate zinc finger occupies 1808–1838; sequence DGCCCSKRVVTAPVVNASVLKLGVEDGLCPH. Active-site for PL2-PRO activity residues include histidine 1888 and aspartate 1901. 2 helical membrane-spanning segments follow: residues 1959 to 1979 and 2022 to 2042; these read FMSR…GLCF and WFKV…LLFM. Positions 1959-2170 are HD1; that stretch reads FMSRNLITVF…FGDEIVVFFI (212 aa). The 65-residue stretch at 2038-2102 folds into the 3Ecto domain; that stretch reads ALLFMTIRFT…TQVVWQHLRD (65 aa). 2 disulfide bridges follow: cysteine 2054–cysteine 2080 and cysteine 2072–cysteine 2077. 3 helical membrane-spanning segments follow: residues 2105–2125, 2127–2147, and 2150–2170; these read IGNV…GVYV, AITL…LGLQ, and IWFL…VFFI. The interval 2176–2266 is Y1; that stretch reads MFIKHVCLGC…VVKLNVQPTG (91 aa). One can recognise a CoV Nsp3 Y domain in the interval 2176-2516; it reads MFIKHVCLGC…PTVCIANKKG (341 aa). Zn(2+)-binding residues include histidine 2180, cysteine 2185, cysteine 2190, cysteine 2193, cysteine 2226, histidine 2229, cysteine 2233, and cysteine 2236. Positions 2180–2193 are ZF1; that stretch reads HVCLGCDKASCVAC. Residues 2226–2236 form a ZF2 region; it reads CKKHNFFCLNC. Residues 2267 to 2356 are Y2; it reads PATILIDKVE…LVDSALLASL (90 aa). Residues 2267–2516 form a coV-Y region; sequence PATILIDKVE…PTVCIANKKG (250 aa). Residues 2357-2414 form a Y3 region; the sequence is SVDFGASLHSAFVSVLSNSFGKDLSSCNDMQDCKSTLGFDDVPLDTFNAAVAEAHRYD. The Y4 stretch occupies residues 2415 to 2516; that stretch reads VLLTDMSFNN…PTVCIANKKG (102 aa). Transmembrane regions (helical) follow at residues 2528–2548, 2619–2639, 2654–2674, 2754–2774, 2787–2807, 2814–2834, and 2863–2883; these read FFWF…FLDF, IPAG…TIFG, GACI…TAVY, GSDF…ISVF, ILFN…FTKF, MSVG…SYIV, and LGFL…VYAF. An HD2 region spans residues 2528–2883; that stretch reads FFWFLCLFIV…PWWVLMVYAF (356 aa). The Nsp4C domain occupies 2902–2997; that stretch reads LFEGDKFVGS…PTVSYNSTLQ (96 aa). Positions 2998–3299 constitute a Peptidase C30 domain; sequence AGLRKMAQPS…VRQMYGVNLQ (302 aa). Catalysis depends on for 3CL-PRO activity residues histidine 3038 and cysteine 3141. The next 7 helical transmembrane spans lie at 3336–3356, 3361–3381, 3399–3419, 3431–3451, 3454–3474, 3476–3496, and 3500–3520; these read GYVT…MFTL, LFFQ…NLAF, LMGF…VTIL, PASS…YFYA, ILSC…VGAV, YKVA…FGDI, and MFCY…LYWF. The tract at residues 3336-3520 is HD3; it reads GYVTPMFACL…CCFYGILYWF (185 aa). One can recognise a RdRp Nsp7 cofactor domain in the interval 3580-3662; it reads SKLTDIKCSN…SYFNDNSMLQ (83 aa). The region spanning 3663–3857 is the RdRp Nsp8 cofactor domain; it reads SVASTYVGLP…LGCERIVKLQ (195 aa). Residues 3858–3965 form the Nsp9 ssRNA-binding domain; that stretch reads NNEIIPGKLK…GYIGATVRLQ (108 aa). One can recognise an ExoN/MTase coactivator domain in the interval 3966–4103; sequence AGKQTEQAIN…CDRSIMQSTD (138 aa). Zn(2+) contacts are provided by cysteine 4039, cysteine 4042, histidine 4048, cysteine 4055, cysteine 4081, cysteine 4084, cysteine 4092, and cysteine 4094. 2 zinc fingers span residues 4039-4055 and 4081-4094; these read CLYC…DGFC and CKVC…GCTC. Positions 4106–4355 constitute a NiRAN domain; the sequence is YLNRVRGSSA…ASECFVKSDI (250 aa). A Nsp12 Interface domain is found at 4361 to 4459; that stretch reads KSYDLLEYDF…WNNDLNLHSS (99 aa). Zn(2+)-binding residues include histidine 4390, cysteine 4396, cysteine 4401, cysteine 4405, and cysteine 4582. Residues 4460–5027 form the Nsp12 RNA-dependent RNA polymerase domain; that stretch reads RLSINELLQF…NMYEKSAVLQ (568 aa). The segment at 4462–4676 is rdRp Fingers N-ter; sequence SINELLQFCS…HQKHLKSIVN (215 aa). The interval 4677 to 4715 is rdRp Palm N-ter; sequence TRGASVVIGTTKFYGGWDNMLKNLIDGVENPCLMGWDYP. The RdRp catalytic domain occupies 4707-4869; the sequence is PCLMGWDYPK…CYNNDYASLG (163 aa). Positions 4716–4774 are rdRp Fingers C-ter; sequence KCDRALPNMIRMISAMILGSKHTTCCSSTDRFFRLCNELAQVLTEVVYSNGGFYLKPGG. 3 residues coordinate Zn(2+): histidine 4737, cysteine 4740, and cysteine 4741. Residues 4775 to 4910 form a rdRp Palm C-ter region; the sequence is TTSGDATTAY…NKGPHEFCSQ (136 aa). Active-site for RNA-directed RNA polymerase activity residues include serine 4854, aspartate 4855, and aspartate 4856. Residues 4911-5027 are rdRp Thumb; sequence HTMQIVDKEG…NMYEKSAVLQ (117 aa). The CV ZBD domain occupies 5028–5140; it reads SAGLCVVCGS…EDFNRIATSD (113 aa). Positions 5032, 5035, 5043, 5046, 5053, 5056, 5060, 5066, 5077, 5082, 5099, and 5102 each coordinate Zn(2+). The (+)RNA virus helicase ATP-binding domain occupies 5275-5466; it reads STIHKLHPAF…MCALKPDVFL (192 aa). 5310-5317 contributes to the ATP binding site; it reads GPPGSGKS. The 170-residue stretch at 5467–5636 folds into the (+)RNA virus helicase C-terminal domain; that stretch reads HKCYRCPAEI…EGCGLFKDCS (170 aa). In terms of domain architecture, ExoN spans 5696–5910; it reads LFCTRDFAMR…RCLAIHDCFV (215 aa). Catalysis depends on for exoribonuclease activity residues aspartate 5714, glutamate 5716, and glutamate 5815. 7 residues coordinate Zn(2+): cysteine 5831, cysteine 5833, cysteine 5849, histidine 5852, histidine 5880, cysteine 5884, and histidine 5887. Catalysis depends on for exoribonuclease activity residues histidine 5891 and aspartate 5896. Residue cysteine 5902 participates in Zn(2+) binding. The N7-MTase domain occupies 5919-6140; the sequence is YPFIGNEAVI…NLWQTFSNNL (222 aa). S-adenosyl-L-methionine is bound at residue 5954-5960; the sequence is DIGNPKG. The tract at residues 6031 to 6045 is gpppA-binding; that stretch reads CNGGSLYVNNHAFHT. Positions 6069, 6086, 6097, and 6100 each coordinate Zn(2+). In terms of domain architecture, Nsp15 N-terminal oligomerization spans 6142 to 6202; sequence GLENIAFNVL…NVAFELYAKR (61 aa). The 118-residue stretch at 6203–6320 folds into the AV-Nsp11N/CoV-Nsp15M domain; the sequence is KVGLTPPITI…IYTRKNGKFE (118 aa). The NendoU domain maps to 6337–6477; the sequence is SPRSDMEKDF…KDHKLQTFYP (141 aa). Residues histidine 6367, histidine 6382, and lysine 6423 each act as for uridylate-specific endoribonuclease activity in the active site. Residues 6481–6777 enclose the Nidovirus-type SAM-dependent 2'-O-MTase domain; that stretch reads ASEWKCGYSM…AICGFSNHLV (297 aa). Residues lysine 6525, aspartate 6609, lysine 6649, and glutamate 6682 each act as for 2'-O-methyltransferase in the active site.

Belongs to the coronaviruses polyprotein 1ab family. In terms of assembly, interacts with PL-PRO and nsp6. Monomer. Homodimer; disulfide-linked. As to quaternary structure, interacts with nsp8 and nsp12 to form the replication-transcription complex (RTC): nsp12, nsp7, two subunits of nsp8, and up to two subunits of nsp13. Eight copies of nsp7 and eight copies of nsp8 assemble to form a heterohexadecamer dsRNA-encircling ring structure. In terms of assembly, interacts with nsp7, nsp13 and nsp12 to form the replication-transcription complex (RTC): nsp12, nsp7, two subunits of nsp8, and up to two subunits of nsp13. Eight copies of nsp7 and eight copies of nsp8 assemble to form a heterohexadecamer dsRNA-encircling ring structure. Homodimer. As to quaternary structure, forms a dodecamer and interacts with nsp14 and nsp16; these interactions enhance nsp14 and nsp16 enzymatic activities. Requires Mn(2+) as cofactor. Specific enzymatic cleavages in vivo by its own proteases yield mature proteins. 3CL-PRO and PL-PRO proteinases are autocatalytically processed.

The protein localises to the host cytoplasm. It localises to the host nucleus. Its subcellular location is the host membrane. The protein resides in the host perinuclear region. It is found in the host endoplasmic reticulum. The protein localises to the host endoplasmic reticulum-Golgi intermediate compartment. It catalyses the reaction Thiol-dependent hydrolysis of ester, thioester, amide, peptide and isopeptide bonds formed by the C-terminal Gly of ubiquitin (a 76-residue protein attached to proteins as an intracellular targeting signal).. The enzyme catalyses a 5'-end diphospho-ribonucleoside in mRNA + GTP + H(+) = a 5'-end (5'-triphosphoguanosine)-ribonucleoside in mRNA + diphosphate. The catalysed reaction is RNA(n) + a ribonucleoside 5'-triphosphate = RNA(n+1) + diphosphate. It carries out the reaction ATP + H2O = ADP + phosphate + H(+). It catalyses the reaction a 5'-end (5'-triphosphoguanosine)-ribonucleoside in mRNA + S-adenosyl-L-methionine = a 5'-end (N(7)-methyl 5'-triphosphoguanosine)-ribonucleoside in mRNA + S-adenosyl-L-homocysteine. The enzyme catalyses uridylyl-uridylyl-ribonucleotide-RNA = a 3'-end uridylyl-2',3'-cyclophospho-uridine-RNA + a 5'-end dephospho-ribonucleoside-RNA. The catalysed reaction is a 5'-end (N(7)-methyl 5'-triphosphoguanosine)-ribonucleoside in mRNA + S-adenosyl-L-methionine = a 5'-end (N(7)-methyl 5'-triphosphoguanosine)-(2'-O-methyl-ribonucleoside) in mRNA + S-adenosyl-L-homocysteine + H(+). Inhibited by the substrate-analog Cbz-Val-Asn-Ser-Thr-Leu-Gln-CMK. Inhibited by (R)-16. Functionally, multifunctional protein responsible for the transcription of negative stranded RNA, leader RNA, subgenomic mRNAs and progeny virion RNA as well as proteinases responsible for the cleavage of the polyprotein into functional products. Its function is as follows. Plays a role in the inhibition of host interferon and pro-inflammatory cytokines production. Suppresses host RELA/p65 activation by blocking NFKBIA phosphorylation. Targets also the RLR pathway downstream of the IRF3 activation by targeting host CREBBP to proteasomal degradation. Responsible for the cleavages located at the N-terminus of the replicase polyprotein. Participates together with nsp4 in the assembly of virally-induced cytoplasmic double-membrane vesicles necessary for viral replication. Forms a molecular pore spanning the double membrane of the coronavirus replication organelle. In addition, PLP2 possesses a deubiquitinating/deISGylating activity and processes both 'Lys-48'- and 'Lys-63'-linked polyubiquitin chains from cellular substrates. PLP2 also antagonizes innate immune induction of type I interferon by blocking the nuclear translocation of host IRF-3. Participates in the inhibition of the integrated stress response (ISR) in the infected host cell. In terms of biological role, participates in the assembly of virally-induced cytoplasmic double-membrane vesicles necessary for viral replication. Functionally, responsible for the majority of cleavages as it cleaves the C-terminus of replicase polyprotein at 11 sites. Recognizes substrates containing the core sequence [ILMVF]-Q-|-[SGACN]. Also contains an ADP-ribose-1''-phosphate (ADRP)-binding function. Participates in the inhibition of the integrated stress response (ISR) in the infected host cell. Its function is as follows. Plays a role in the initial induction of autophagosomes from host endoplasmic reticulum. Later, limits the expansion of these phagosomes that are no longer able to deliver viral components to lysosomes. Plays a role in viral RNA synthesis. Forms a hexadecamer with nsp8 (8 subunits of each) that may participate in viral replication by acting as a primase. Alternatively, may synthesize substantially longer products than oligonucleotide primers. In terms of biological role, plays a role in viral RNA synthesis. Forms a hexadecamer with nsp7 (8 subunits of each) that may participate in viral replication by acting as a primase. Alternatively, may synthesize substantially longer products than oligonucleotide primers. Functionally, forms a primer, NSP9-pU, which is utilized by the polymerase for the initiation of RNA chains. Interacts with ribosome signal recognition particle RNA (SRP). Together with NSP8, suppress protein integration into the cell membrane, thereby disrupting host immune defenses. Its function is as follows. Plays a pivotal role in viral transcription by stimulating both nsp14 3'-5' exoribonuclease and nsp16 2'-O-methyltransferase activities. Therefore plays an essential role in viral mRNAs cap methylation. RNA-directed RNA polymerase that catalyzes the transcription of viral genomic and subgenomic RNAs. Acts in complex with nsp7 and nsp8 to transcribe both the minus and positive strands of genomic RNA. The kinase-like NiRAN domain of NSP12 attaches one or more nucleotides to the amino terminus of NSP9, forming a covalent RNA-protein intermediate that serves as transcription/replication primer. Subgenomic RNAs (sgRNAs) are formed by discontinuous transcription: The polymerase has the ability to pause at transcription-regulating sequences (TRS) and jump to the leader TRS, resulting in a major deletion. This creates a series of subgenomic RNAs that are replicated, transcribed and translated. In addition, Nsp12 is a subunit of the viral RNA capping enzyme that catalyzes the RNA guanylyltransferase reaction for genomic and sub-genomic RNAs. Subsequently, the NiRAN domain transfers RNA to GDP, and forms the core cap structure GpppA-RNA. In terms of biological role, plays a role in viral RNA synthesis. Multi-functional protein with a zinc-binding domain in N-terminus displaying RNA and DNA duplex-unwinding activities with 5' to 3' polarity. ATPase activity is strongly stimulated by poly(U), poly(dT), poly(C), poly(dA), but not by poly(G). Functionally, plays a role in viral RNA synthesis through two distinct activities. The N7-guanine methyltransferase activity plays a role in the formation of the cap structure GpppA-RNA. The proofreading exoribonuclease reduces the sensitivity of the virus to RNA mutagens during replication. This activity acts on both ssRNA and dsRNA in a 3'-5' direction. Its function is as follows. Plays a role in viral transcription/replication and prevents the simultaneous activation of host cell dsRNA sensors, such as MDA5/IFIH1, OAS, and PKR. Acts by degrading the 5'-polyuridines generated during replication of the poly(A) region of viral genomic and subgenomic RNAs. Catalyzes a two-step reaction in which a 2'3'-cyclic phosphate (2'3'-cP) is first generated by 2'-O transesterification, which is then hydrolyzed to a 3'-phosphate (3'-P). If not degraded, poly(U) RNA would hybridize with poly(A) RNA tails and activate host dsRNA sensors. Decreases the RNA levels and thus the expression of host TBK1 and IRF3, antagonizing the host innate response. This is Replicase polyprotein 1ab (rep) from Sus scrofa (Pig).